Reading from the N-terminus, the 1048-residue chain is Protein argonaute 7 (1048 aa).

Residues 1–14 are compositionally biased toward basic and acidic residues; sequence MEGEREGVVAKNED. 2 disordered regions span residues 1–50 and 121–141; these read MEGE…GSSG and KAAD…KKPP. Residues 16 to 37 are compositionally biased toward gly residues; sequence AGGGGGGLGTGGNGGGGGGGSA. The span at 131–141 shows a compositional bias: basic residues; that stretch reads MWKHRPSKKPP. The PAZ domain maps to 422 to 530; it reads KRCDFLKDLP…VPMELCVVCE (109 aa). One can recognise a Piwi domain in the interval 709-1017; the sequence is LLICVMERRH…AAYRGRLYLE (309 aa).

The protein belongs to the argonaute family. Ago subfamily. Expressed in the reproductive shoot apex.

Involved in the RNA silencing pathway. May bind to short RNAs such as microRNAs (miRNAs) or short interfering RNAs (siRNAs), and represses the translation of mRNAs which are complementary to them. Regulates shoot apical meristem (SAM) initiation and maintenance and leaf polarization through the trans-acting siRNAS (ta-siRNAs) pathway which probably modulates the expression of the ARF2, ARF3, ARF4, ARF14 and ARF15 genes. In Oryza sativa subsp. japonica (Rice), this protein is Protein argonaute 7 (AGO7).